A 394-amino-acid chain; its full sequence is NAD(P)H-quinone oxidoreductase subunit H (394 aa).

This sequence belongs to the complex I 49 kDa subunit family. As to quaternary structure, NDH-1 can be composed of about 15 different subunits; different subcomplexes with different compositions have been identified which probably have different functions.

Its subcellular location is the cellular thylakoid membrane. It carries out the reaction a plastoquinone + NADH + (n+1) H(+)(in) = a plastoquinol + NAD(+) + n H(+)(out). The enzyme catalyses a plastoquinone + NADPH + (n+1) H(+)(in) = a plastoquinol + NADP(+) + n H(+)(out). NDH-1 shuttles electrons from an unknown electron donor, via FMN and iron-sulfur (Fe-S) centers, to quinones in the respiratory and/or the photosynthetic chain. The immediate electron acceptor for the enzyme in this species is believed to be plastoquinone. Couples the redox reaction to proton translocation, and thus conserves the redox energy in a proton gradient. Cyanobacterial NDH-1 also plays a role in inorganic carbon-concentration. The sequence is that of NAD(P)H-quinone oxidoreductase subunit H from Nostoc punctiforme (strain ATCC 29133 / PCC 73102).